We begin with the raw amino-acid sequence, 84 residues long: Acyl-CoA-binding protein (84 aa).

Residues 1–84 (MTTFEEAAQK…LYEQLATKYA (84 aa)) form the ACB domain. An acyl-CoA contacts are provided by residues lysine 12, 27–31 (YGLYK), lysine 53, and tyrosine 72.

This sequence belongs to the ACBP family. Interacts with dhkA.

Functionally, binds to acyl-CoA. Processed into the SDF-2 (spore differentiation factor 2) a peptide which triggers sporulation. SDF-2 appears to stimulate prestalk cells to release additional SDF-2 by acting through a signal transduction pathway that also involves dhkA, regA and PKA. Induces encapsulation of prespore cells in a dhkA-dependent manner. GABA induces the release of acbA from prespore cells and induces the exposure of tagC on the surface of prestalk cells where it can convert acbA to SDF-2. Glutamate acts as a competitive inhibitor and is also able to inhibit induction of sporulation by SDF-2. This chain is Acyl-CoA-binding protein (acbA), found in Dictyostelium discoideum (Social amoeba).